A 468-amino-acid chain; its full sequence is Hexokinase (468 aa).

One can recognise a Hexokinase domain in the interval 10-466 (AKQLAELEVV…SGKGAALIAD (457 aa)). The segment at 74-225 (TGAEVGEAYA…NVPAVCKAIV (152 aa)) is hexokinase small subdomain. An ATP-binding site is contributed by 85–90 (DFGGST). A glucose-binding region spans residues 163–189 (PVGFTFSFPCAQAALNSSFLIEWTKGF). Residues 226–455 (NDTVGTLVSC…KNIHYCIADD (230 aa)) form a hexokinase large subdomain region.

Belongs to the hexokinase family.

It carries out the reaction a D-hexose + ATP = a D-hexose 6-phosphate + ADP + H(+). The catalysed reaction is D-mannose + ATP = D-mannose 6-phosphate + ADP + H(+). The enzyme catalyses D-fructose + ATP = D-fructose 6-phosphate + ADP + H(+). It catalyses the reaction D-glucose + ATP = D-glucose 6-phosphate + ADP + H(+). The protein operates within carbohydrate metabolism; hexose metabolism. It participates in carbohydrate degradation; glycolysis; D-glyceraldehyde 3-phosphate and glycerone phosphate from D-glucose: step 1/4. Its function is as follows. Catalyzes the phosphorylation of various hexoses to hexose 6-phosphate. This is Hexokinase (HXK) from Toxoplasma gondii.